The sequence spans 353 residues: Chorismate synthase (353 aa).

Residues arginine 48 and arginine 54 each contribute to the NADP(+) site. Residues 125–127 (RSS), 238–239 (NA), glycine 278, 293–297 (KPTSS), and arginine 319 contribute to the FMN site.

Belongs to the chorismate synthase family. Homotetramer. FMNH2 serves as cofactor.

The catalysed reaction is 5-O-(1-carboxyvinyl)-3-phosphoshikimate = chorismate + phosphate. The protein operates within metabolic intermediate biosynthesis; chorismate biosynthesis; chorismate from D-erythrose 4-phosphate and phosphoenolpyruvate: step 7/7. Functionally, catalyzes the anti-1,4-elimination of the C-3 phosphate and the C-6 proR hydrogen from 5-enolpyruvylshikimate-3-phosphate (EPSP) to yield chorismate, which is the branch point compound that serves as the starting substrate for the three terminal pathways of aromatic amino acid biosynthesis. This reaction introduces a second double bond into the aromatic ring system. This chain is Chorismate synthase, found in Bordetella bronchiseptica (strain ATCC BAA-588 / NCTC 13252 / RB50) (Alcaligenes bronchisepticus).